The sequence spans 191 residues: Protein LURP-one-related 6 (191 aa).

The protein belongs to the LOR family.

Functionally, might be related to the phospholipid scramblase and tubby-like superfamily of membrane tethered transcription factors. The polypeptide is Protein LURP-one-related 6 (Arabidopsis thaliana (Mouse-ear cress)).